A 365-amino-acid polypeptide reads, in one-letter code: Aminomethyltransferase (365 aa).

It belongs to the GcvT family. As to quaternary structure, the glycine cleavage system is composed of four proteins: P, T, L and H.

The catalysed reaction is N(6)-[(R)-S(8)-aminomethyldihydrolipoyl]-L-lysyl-[protein] + (6S)-5,6,7,8-tetrahydrofolate = N(6)-[(R)-dihydrolipoyl]-L-lysyl-[protein] + (6R)-5,10-methylene-5,6,7,8-tetrahydrofolate + NH4(+). Functionally, the glycine cleavage system catalyzes the degradation of glycine. This chain is Aminomethyltransferase, found in Chlorobaculum parvum (strain DSM 263 / NCIMB 8327) (Chlorobium vibrioforme subsp. thiosulfatophilum).